We begin with the raw amino-acid sequence, 205 residues long: Small ribosomal subunit protein uS4 (205 aa).

The interval 20 to 46 is disordered; it reads WGRSKSPVNRREYGPGQHGQRRKGKLS. In terms of domain architecture, S4 RNA-binding spans 94–157; sequence RRLDAVVYRA…RQLTLVLEAS (64 aa).

This sequence belongs to the universal ribosomal protein uS4 family. As to quaternary structure, part of the 30S ribosomal subunit. Contacts protein S5. The interaction surface between S4 and S5 is involved in control of translational fidelity.

Functionally, one of the primary rRNA binding proteins, it binds directly to 16S rRNA where it nucleates assembly of the body of the 30S subunit. Its function is as follows. With S5 and S12 plays an important role in translational accuracy. In Beijerinckia indica subsp. indica (strain ATCC 9039 / DSM 1715 / NCIMB 8712), this protein is Small ribosomal subunit protein uS4.